Reading from the N-terminus, the 177-residue chain is MMAKPKKTIPAKLSDERIVIYDKDGISRLNEKRYGELHENFLSLSFVEGLYLVSKNWISLRDKNKKLLSFEELFDVAQNIDRKLCIRYLAYKDLRNRGYTVRTGLKYGSDFRLYERSNIDEIHSRYLVKVFSEEIPCEISEITGFVRVAHSVRKELIIAIVDADGSVVYYNMGYLKL.

Residues tyrosine 114, histidine 123, and lysine 154 contribute to the active site.

This sequence belongs to the tRNA-intron endonuclease family. Archaeal short subfamily. In terms of assembly, homotetramer; although the tetramer contains four active sites, only two participate in the cleavage. Therefore, it should be considered as a dimer of dimers.

It carries out the reaction pretRNA = a 3'-half-tRNA molecule with a 5'-OH end + a 5'-half-tRNA molecule with a 2',3'-cyclic phosphate end + an intron with a 2',3'-cyclic phosphate and a 5'-hydroxyl terminus.. Functionally, endonuclease that removes tRNA introns. Cleaves pre-tRNA at the 5'- and 3'-splice sites to release the intron. The products are an intron and two tRNA half-molecules bearing 2',3' cyclic phosphate and 5'-OH termini. Recognizes a pseudosymmetric substrate in which 2 bulged loops of 3 bases are separated by a stem of 4 bp. In Methanococcus maripaludis (strain DSM 14266 / JCM 13030 / NBRC 101832 / S2 / LL), this protein is tRNA-splicing endonuclease.